We begin with the raw amino-acid sequence, 303 residues long: Mycothiol acetyltransferase (303 aa).

2 consecutive N-acetyltransferase domains span residues 1-150 and 162-303; these read MALL…RPLD and VTIR…QFGR. Position 18 (Glu18) interacts with 1D-myo-inositol 2-(L-cysteinylamino)-2-deoxy-alpha-D-glucopyranoside. An acetyl-CoA-binding site is contributed by 77–79; it reads LAV. Positions 189, 229, and 237 each coordinate 1D-myo-inositol 2-(L-cysteinylamino)-2-deoxy-alpha-D-glucopyranoside. Acetyl-CoA is bound by residues 241 to 243 and 248 to 254; these read VGV and QGNGLGR. Tyr275 is a 1D-myo-inositol 2-(L-cysteinylamino)-2-deoxy-alpha-D-glucopyranoside binding site. 280–285 lines the acetyl-CoA pocket; sequence NTAAIK.

This sequence belongs to the acetyltransferase family. MshD subfamily. Monomer.

It carries out the reaction 1D-myo-inositol 2-(L-cysteinylamino)-2-deoxy-alpha-D-glucopyranoside + acetyl-CoA = mycothiol + CoA + H(+). Its function is as follows. Catalyzes the transfer of acetyl from acetyl-CoA to desacetylmycothiol (Cys-GlcN-Ins) to form mycothiol. In Saccharopolyspora erythraea (strain ATCC 11635 / DSM 40517 / JCM 4748 / NBRC 13426 / NCIMB 8594 / NRRL 2338), this protein is Mycothiol acetyltransferase.